The sequence spans 345 residues: MKLHAPSFWWQKASFPALALWPLSFLYGRIAARRMRGSSAYAPAVPVICIGNVTLGGAGKTPTALALAKAALAMGLKPGFLSRGYGGTVRRPTLVDPGHHTAKDVGDEPLLLASVAPTVVASRRRDGARELERQGIDLIIMDDGFQSAQIRIDCAVVVTDSYKGDGNGFVFPAGPLRAPLAIQFQKLDMLLVVGKGDAAIPMVRRGARMGKPVLTAQLHPLPGPNLRGQRVLAYAGIADPEKFYRTLRELGADIVVARGFGDHQPLSAAAIAELIEEAEAKNLSLVTTAKDQARLRGSRRGGAGQDRAQELLAKSTVIEIEMIFDDPAVPARVIDQAQDRFRRSR.

54 to 61 (TLGGAGKT) lines the ATP pocket.

It belongs to the LpxK family.

The enzyme catalyses a lipid A disaccharide + ATP = a lipid IVA + ADP + H(+). Its pathway is glycolipid biosynthesis; lipid IV(A) biosynthesis; lipid IV(A) from (3R)-3-hydroxytetradecanoyl-[acyl-carrier-protein] and UDP-N-acetyl-alpha-D-glucosamine: step 6/6. In terms of biological role, transfers the gamma-phosphate of ATP to the 4'-position of a tetraacyldisaccharide 1-phosphate intermediate (termed DS-1-P) to form tetraacyldisaccharide 1,4'-bis-phosphate (lipid IVA). The polypeptide is Tetraacyldisaccharide 4'-kinase (Allorhizobium ampelinum (strain ATCC BAA-846 / DSM 112012 / S4) (Agrobacterium vitis (strain S4))).